The following is a 132-amino-acid chain: Large-conductance mechanosensitive channel (132 aa).

2 helical membrane-spanning segments follow: residues 14–34 (VIDLAVGVVIGAAFGKIVSSL) and 67–87 (GNFIQTIFDFLIIAAAIFMFV).

This sequence belongs to the MscL family. As to quaternary structure, homopentamer.

It localises to the cell membrane. Channel that opens in response to stretch forces in the membrane lipid bilayer. May participate in the regulation of osmotic pressure changes within the cell. The chain is Large-conductance mechanosensitive channel from Bacillus anthracis (strain A0248).